The following is a 606-amino-acid chain: Mitogen-activated protein kinase kinase kinase 7 (606 aa).

Positions 1 to 300 (MSTASAASSS…FPGADEPLQY (300 aa)) are interaction with MAPK8IP1. In terms of domain architecture, Protein kinase spans 36-291 (IEVEEVVGRG…KIMTHLMRYF (256 aa)). ATP contacts are provided by residues 42–50 (VGRGAFGVV) and Lys63. Lys72 participates in a covalent cross-link: Glycyl lysine isopeptide (Lys-Gly) (interchain with G-Cter in ubiquitin). Asp156 serves as the catalytic Proton acceptor. Residue Lys158 forms a Glycyl lysine isopeptide (Lys-Gly) (interchain with G-Cter in ubiquitin) linkage. Residues Thr184 and Thr187 each carry the phosphothreonine; by autocatalysis modification. A Phosphoserine; by autocatalysis modification is found at Ser192. Residue Lys209 forms a Glycyl lysine isopeptide (Lys-Gly) (interchain with G-Cter in ubiquitin) linkage. Disordered stretches follow at residues 301–338 (PCQY…MEQV) and 354–391 (KNQA…MSAD). Polar residues predominate over residues 306 to 338 (DEGQSNSATSTGSFMDIASTNTSNKSDTNMEQV). Low complexity predominate over residues 361–375 (SDSGRLSLGASRGSS). 3 positions are modified to phosphoserine: Ser367, Ser389, and Ser439. Over residues 443–452 (LTVTGTEPGQ) the composition is skewed to polar residues. The interval 443-492 (LTVTGTEPGQVSSRSSSPSVRMITTSGPTSEKPARSLPWTPDDSTDTNGS) is disordered. Residues 453–463 (VSSRSSSPSVR) are compositionally biased toward low complexity. Ser455 carries the post-translational modification Phosphoserine.

The protein belongs to the protein kinase superfamily. STE Ser/Thr protein kinase family. MAP kinase kinase kinase subfamily. In terms of assembly, can form homodimer. Binds both upstream activators and downstream substrates in multimolecular complexes. Interacts with TAB1/MAP3K7IP1, TAB2/MAP3K7IP2 and TAB3/MAP3K7IP3. Identified in the TRIKA2 complex composed of MAP3K7/TAK1, TAB1/MAP3K7IP1 and TAB2/MAP3K7IP2. Interacts with PPM1L and PPM1B/PP2CB. Interaction with PP2A and PPP6C leads to its repressed activity. Interacts with TRAF6 and TAB1/MAP3K7IP1; during IL-1 signaling. Interacts with TAOK1 and TAOK2; interaction with TAOK2 interferes with MAP3K7 interaction with IKKA, thus preventing NF-kappa-B activation. Interacts with DYNC2I2 (via WD domains). Interacts with CYLD and RBCK1. Interacts with TGFBR1; induces MAP3K7/TAK1 activation by TRAF6. Interacts with MAPK8IP1 and SMAD6. Interacts with isoform 1 of VRK2. Interacts with DAB2; the interaction is induced by TGF-beta stimulation and may mediate TGF-beta stimulated JNK activation. Interacts with TRIM5. Part of a complex containing ITCH, NDFIP1 and MAP3K7. Interacts with PLEKHM1 (via N- and C-terminus). Found in a complex with SH3RF1, RAC2, MAP2K7/MKK7, MAPK8IP1/JIP1, MAPK8/JNK1 and MAPK9/JNK2. Interacts with SASH1. Interacts with RIPK1. Requires Mg(2+) as cofactor. Association with TAB1/MAP3K7IP1 promotes autophosphorylation at Ser-192 and subsequent activation. Association with TAB2/MAP3K7IP2, itself associated with free unanchored Lys-63 polyubiquitin chain, promotes autophosphorylation and subsequent activation of MAP3K7. Dephosphorylation at Ser-192 by PPM1B/PP2CB and at Thr-187 by PP2A and PPP6C leads to inactivation. Deubiquitinated by USP19; leading to negative regulation of TNF-alpha- and IL-1beta-triggered NF-kappa-B activation. Post-translationally, 'Lys-48'-linked polyubiquitination at Lys-72 is induced by TNFalpha, and leads to proteasomal degradation. Undergoes 'Lys-48'-linked polyubiquitination catalyzed by ITCH. 'Lys-63'-linked polyubiquitination at Lys-158 by TRIM8 does not lead to proteasomal degradation but contributes to autophosphorylation and activation. Deubiquitinated by CYLD, a protease that selectively cleaves 'Lys-63'-linked ubiquitin chains.

The protein localises to the cytoplasm. It is found in the cell membrane. The enzyme catalyses L-seryl-[protein] + ATP = O-phospho-L-seryl-[protein] + ADP + H(+). It carries out the reaction L-threonyl-[protein] + ATP = O-phospho-L-threonyl-[protein] + ADP + H(+). With respect to regulation, activated by pro-inflammatory cytokines and in response to physical and chemical stresses, including osmotic stress, oxidative stress, arsenic and ultraviolet light irradiation. Activated by 'Lys-63'-linked polyubiquitination and by autophosphorylation. Association with TAB1/MAP3K7IP1 and TAB2/MAP3K7IP2 promotes activation through autophosphorylation, whereas PPM1B/PP2CB, PP2A and PPP6C dephosphorylation leads to inactivation. Ceramides are also able to activate MAP3K7/TAK1. Functionally, serine/threonine kinase which acts as an essential component of the MAP kinase signal transduction pathway. Plays an important role in the cascades of cellular responses evoked by changes in the environment. Mediates signal transduction of TRAF6, various cytokines including interleukin-1 (IL-1), transforming growth factor-beta (TGFB), TGFB-related factors like BMP2 and BMP4, toll-like receptors (TLR), tumor necrosis factor receptor CD40 and B-cell receptor (BCR). Once activated, acts as an upstream activator of the MKK/JNK signal transduction cascade and the p38 MAPK signal transduction cascade through the phosphorylation and activation of several MAP kinase kinases like MAP2K1/MEK1, MAP2K3/MKK3, MAP2K6/MKK6 and MAP2K7/MKK7. These MAP2Ks in turn activate p38 MAPKs and c-jun N-terminal kinases (JNKs); both p38 MAPK and JNK pathways control the transcription factors activator protein-1 (AP-1). Independently of MAP2Ks and p38 MAPKs, acts as a key activator of NF-kappa-B by promoting activation of the I-kappa-B-kinase (IKK) core complex. Mechanistically, recruited to polyubiquitin chains of RIPK2 and IKBKG/NEMO via TAB2/MAP3K7IP2 and TAB3/MAP3K7IP3, and catalyzes phosphorylation and activation of IKBKB/IKKB component of the IKK complex, leading to NF-kappa-B activation. In osmotic stress signaling, plays a major role in the activation of MAPK8/JNK1, but not that of NF-kappa-B. Promotes TRIM5 capsid-specific restriction activity. Phosphorylates RIPK1 at 'Ser-321' which positively regulates RIPK1 interaction with RIPK3 to promote necroptosis but negatively regulates RIPK1 kinase activity and its interaction with FADD to mediate apoptosis. Phosphorylates STING1 in response to cGAMP-activation, promoting association between STEEP1 and STING1 and STING1 translocation to COPII vesicles. The sequence is that of Mitogen-activated protein kinase kinase kinase 7 (Map3k7) from Rattus norvegicus (Rat).